A 499-amino-acid chain; its full sequence is Glycerol kinase (499 aa).

An ADP-binding site is contributed by Thr13. Thr13, Thr14, and Ser15 together coordinate ATP. Thr13 serves as a coordination point for sn-glycerol 3-phosphate. Arg17 serves as a coordination point for ADP. The sn-glycerol 3-phosphate site is built by Arg83, Glu84, Tyr135, and Asp245. Glycerol is bound by residues Arg83, Glu84, Tyr135, Asp245, and Gln246. ADP is bound by residues Thr267 and Gly310. Thr267, Gly310, Gln314, and Ala411 together coordinate ATP. Positions 411 and 415 each coordinate ADP.

It belongs to the FGGY kinase family.

It catalyses the reaction glycerol + ATP = sn-glycerol 3-phosphate + ADP + H(+). It functions in the pathway polyol metabolism; glycerol degradation via glycerol kinase pathway; sn-glycerol 3-phosphate from glycerol: step 1/1. With respect to regulation, inhibited by fructose 1,6-bisphosphate (FBP). In terms of biological role, key enzyme in the regulation of glycerol uptake and metabolism. Catalyzes the phosphorylation of glycerol to yield sn-glycerol 3-phosphate. The protein is Glycerol kinase of Xylella fastidiosa (strain M12).